Reading from the N-terminus, the 271-residue chain is S-adenosylmethionine decarboxylase proenzyme (271 aa).

Ser-121 (schiff-base intermediate with substrate; via pyruvic acid) is an active-site residue. Pyruvic acid (Ser); by autocatalysis is present on Ser-121. Catalysis depends on His-126, which acts as the Proton acceptor; for processing activity. Cys-149 serves as the catalytic Proton donor; for catalytic activity.

This sequence belongs to the prokaryotic AdoMetDC family. Type 2 subfamily. As to quaternary structure, heterooctamer of four alpha and four beta chains arranged as a tetramer of alpha/beta heterodimers. It depends on pyruvate as a cofactor. In terms of processing, is synthesized initially as an inactive proenzyme. Formation of the active enzyme involves a self-maturation process in which the active site pyruvoyl group is generated from an internal serine residue via an autocatalytic post-translational modification. Two non-identical subunits are generated from the proenzyme in this reaction, and the pyruvate is formed at the N-terminus of the alpha chain, which is derived from the carboxyl end of the proenzyme. The post-translation cleavage follows an unusual pathway, termed non-hydrolytic serinolysis, in which the side chain hydroxyl group of the serine supplies its oxygen atom to form the C-terminus of the beta chain, while the remainder of the serine residue undergoes an oxidative deamination to produce ammonia and the pyruvoyl group blocking the N-terminus of the alpha chain.

The enzyme catalyses S-adenosyl-L-methionine + H(+) = S-adenosyl 3-(methylsulfanyl)propylamine + CO2. It participates in amine and polyamine biosynthesis; S-adenosylmethioninamine biosynthesis; S-adenosylmethioninamine from S-adenosyl-L-methionine: step 1/1. Functionally, catalyzes the decarboxylation of S-adenosylmethionine to S-adenosylmethioninamine (dcAdoMet), the propylamine donor required for the synthesis of the polyamines spermine and spermidine from the diamine putrescine. In Clostridium perfringens (strain SM101 / Type A), this protein is S-adenosylmethionine decarboxylase proenzyme.